Consider the following 356-residue polypeptide: NADH-quinone oxidoreductase subunit H (356 aa).

A run of 8 helical transmembrane segments spans residues 18 to 38, 87 to 107, 120 to 140, 166 to 186, 202 to 222, 257 to 277, 292 to 312, and 333 to 353; these read IVMVAQSVLLLVVLLIAIAYI, GVFLLAPLVSCVLALAAWAVI, VGILYIFAISSLSIYGIIMGG, IGFVIITVLLCAGSLNLSAIV, WLTFLNWYWLPLLPMFVVFYV, LFMLGEYVAITTMCAMGAILF, WVPGVIWFSLKLFFMFFLIAM, and FLPLSLAMVVIVAAVLQFAGI.

It belongs to the complex I subunit 1 family. As to quaternary structure, NDH-1 is composed of 14 different subunits. Subunits NuoA, H, J, K, L, M, N constitute the membrane sector of the complex.

It is found in the cell inner membrane. The catalysed reaction is a quinone + NADH + 5 H(+)(in) = a quinol + NAD(+) + 4 H(+)(out). In terms of biological role, NDH-1 shuttles electrons from NADH, via FMN and iron-sulfur (Fe-S) centers, to quinones in the respiratory chain. The immediate electron acceptor for the enzyme in this species is believed to be ubiquinone. Couples the redox reaction to proton translocation (for every two electrons transferred, four hydrogen ions are translocated across the cytoplasmic membrane), and thus conserves the redox energy in a proton gradient. This subunit may bind ubiquinone. The polypeptide is NADH-quinone oxidoreductase subunit H (Nitrobacter winogradskyi (strain ATCC 25391 / DSM 10237 / CIP 104748 / NCIMB 11846 / Nb-255)).